The sequence spans 415 residues: MSEASSKNLSETLFQNHKQAKETSSLTQYMPSSLELLDTRREQSSQAWYRNLRRLQWIWQGVDPVEQEEILARIASSKHSRTHDEWLDTVMGYRSGNWTYEWTRVGMLHQKQAAERQGEEAADQMFAAALYYSIAGYPHLRNDNLALQAQVLANNAYQEAAKLTGFVVKRLEFSYQNKKIAGYLHLRNTDSPKPVVLVSAGLDSLQTDMWRLFRDYLAKRDIAMLTIDMPSLGASSHWPLTEDSSCLHQAVLNQLADLPWVDHFRIGLIGFRFGGNAMARLAFLESDKVKACVSLGAPIHDIFTSPNKLAAMPKMYLDVLASRLGKNVVDVRSLSGQLMAWSLKVQGFMSGRRTKTPILALGLEGDPVSPYSDNQLVALFSQGGQAKKVKSKTISQGYEQSLDLAINWLEDELCK.

The protein belongs to the FrsA family.

The enzyme catalyses a carboxylic ester + H2O = an alcohol + a carboxylate + H(+). Catalyzes the hydrolysis of esters. This is Esterase FrsA from Vibrio cholerae serotype O1 (strain ATCC 39541 / Classical Ogawa 395 / O395).